A 243-amino-acid chain; its full sequence is Exosome complex component Rrp41 (243 aa).

This sequence belongs to the RNase PH family. Rrp41 subfamily. In terms of assembly, component of the archaeal exosome complex. Forms a hexameric ring-like arrangement composed of 3 Rrp41-Rrp42 heterodimers. The hexameric ring associates with a trimer of Rrp4 and/or Csl4 subunits.

It is found in the cytoplasm. Catalytic component of the exosome, which is a complex involved in RNA degradation. Has 3'-&gt;5' exoribonuclease activity. Can also synthesize heteromeric RNA-tails. The protein is Exosome complex component Rrp41 of Sulfolobus acidocaldarius (strain ATCC 33909 / DSM 639 / JCM 8929 / NBRC 15157 / NCIMB 11770).